Reading from the N-terminus, the 129-residue chain is Histone H2A-IV (129 aa).

The tract at residues 1-22 is disordered; it reads MSGRGKQGGKARAKAKSRSSRA. At Ser-2 the chain carries N-acetylserine. Ser-2 carries the phosphoserine modification. Lys-6 carries the post-translational modification N6-(2-hydroxyisobutyryl)lysine. N6-acetyllysine occurs at positions 6 and 10. The segment covering 7–19 has biased composition (basic residues); it reads QGGKARAKAKSRS. Lys-10 is subject to N6-(2-hydroxyisobutyryl)lysine; alternate. The residue at position 10 (Lys-10) is an N6-lactoyllysine; alternate. The residue at position 10 (Lys-10) is an N6-succinyllysine. Residues Lys-14 and Lys-16 each participate in a glycyl lysine isopeptide (Lys-Gly) (interchain with G-Cter in ubiquitin) cross-link. Residue Lys-37 is modified to N6-(2-hydroxyisobutyryl)lysine; alternate. N6-(2-hydroxyisobutyryl)lysine occurs at positions 75 and 76. The residue at position 96 (Lys-96) is an N6-(2-hydroxyisobutyryl)lysine; alternate. Position 96 is an N6-succinyllysine (Lys-96). Lys-96 carries the N6-glutaryllysine; alternate modification. Position 100 is an N6-glutaryllysine (Lys-100). N5-methylglutamine is present on Gln-105. Lys-119 carries the N6-(2-hydroxyisobutyryl)lysine; alternate modification. An N6-glutaryllysine; alternate mark is found at Lys-119 and Lys-120. Residue Lys-120 forms a Glycyl lysine isopeptide (Lys-Gly) (interchain with G-Cter in ubiquitin) linkage.

Belongs to the histone H2A family. The nucleosome is a histone octamer containing two molecules each of H2A, H2B, H3 and H4 assembled in one H3-H4 heterotetramer and two H2A-H2B heterodimers. The octamer wraps approximately 147 bp of DNA. In terms of processing, monoubiquitination of Lys-120 (H2AK119Ub) gives a specific tag for epigenetic transcriptional repression. Following DNA double-strand breaks (DSBs), it is ubiquitinated through 'Lys-63' linkage of ubiquitin moieties, leading to the recruitment of repair proteins to sites of DNA damage. H2AK119Ub and ionizing radiation-induced 'Lys-63'-linked ubiquitination are distinct events. Post-translationally, phosphorylation on Ser-2 is enhanced during mitosis. Phosphorylation on Ser-2 directly represses transcription. Glutamine methylation at Gln-105 (H2AQ104me) by FBL is specifically dedicated to polymerase I. It is present at 35S ribosomal DNA locus and impairs binding of the FACT complex.

The protein resides in the nucleus. Its subcellular location is the chromosome. In terms of biological role, core component of nucleosome. Nucleosomes wrap and compact DNA into chromatin, limiting DNA accessibility to the cellular machineries which require DNA as a template. Histones thereby play a central role in transcription regulation, DNA repair, DNA replication and chromosomal stability. DNA accessibility is regulated via a complex set of post-translational modifications of histones, also called histone code, and nucleosome remodeling. This chain is Histone H2A-IV, found in Gallus gallus (Chicken).